A 351-amino-acid polypeptide reads, in one-letter code: Auxin-responsive protein IAA27 (351 aa).

The disordered stretch occupies residues 1–37 (MMNLISFETPPLGRRSQDGGSSSSSITAATTTTNKAK). A compositionally biased stretch (low complexity) spans 21–34 (SSSSSITAATTTTN). The region spanning 233–327 (NMFAKVHMDG…SAKRLYIAKN (95 aa)) is the PB1 domain.

Belongs to the Aux/IAA family. In terms of assembly, homodimers and heterodimers. As to expression, expressed in roots and seedlings.

It localises to the nucleus. Aux/IAA proteins are short-lived transcriptional factors that function as repressors of early auxin response genes at low auxin concentrations. This chain is Auxin-responsive protein IAA27 (IAA27), found in Oryza sativa subsp. japonica (Rice).